Consider the following 130-residue polypeptide: Iron-sulfur cluster insertion protein ErpA (130 aa).

Positions 46, 116, and 118 each coordinate iron-sulfur cluster.

Belongs to the HesB/IscA family. In terms of assembly, homodimer. The cofactor is iron-sulfur cluster.

Its function is as follows. Required for insertion of 4Fe-4S clusters for at least IspG. The protein is Iron-sulfur cluster insertion protein ErpA of Legionella pneumophila (strain Paris).